We begin with the raw amino-acid sequence, 475 residues long: MKHSHEEIRKIIPEMRRVQQIHFIGIGGAGMSGIAEILLNEGYQISGSDIADGVVTQRLAQAGAKIYIGHAEEHIKGASVVVVSSAIKDDNPELVASKQKRIPVIQRAQMLAEIMRFRHGIAVAGTHGKTTTTAMISMIYTQAKLDPTFVNGGLVKSAGKNAHLGASRYLIAEADESDASFLHLQPMVSVVTNMEPDHMDTYEGDFEKMKATYVKFLHNLPFYGLAVMCADDPVLMELVPKVGRQVITYGFSEQADYRIEDYEQTGFQGHYTVICPNNERINVLLNVPGKHNALNATAALAVAKEEGIANEAILEALADFQGAGRRFDQLGEFIRPNGKVRLVDDYGHHPTEVDVTIKAAREGWGDKRIVMIFQPHRYSRTRDLFDDFVQVLSLVDALIMLDVYAAGEAPIVGADSKSLCRSIRNLGKVDPILVSDTSQLGDVLDQIIQDGDLILAQGAGSVSKISRGLAESWKN.

125 to 131 (GTHGKTT) is an ATP binding site.

This sequence belongs to the MurCDEF family.

The protein localises to the cytoplasm. The enzyme catalyses UDP-N-acetyl-alpha-D-muramate + L-alanine + ATP = UDP-N-acetyl-alpha-D-muramoyl-L-alanine + ADP + phosphate + H(+). Its pathway is cell wall biogenesis; peptidoglycan biosynthesis. Cell wall formation. This chain is UDP-N-acetylmuramate--L-alanine ligase, found in Haemophilus influenzae (strain 86-028NP).